We begin with the raw amino-acid sequence, 156 residues long: Phosphopantetheine adenylyltransferase (156 aa).

The protein belongs to the eukaryotic CoaD family.

It localises to the cytoplasm. The catalysed reaction is (R)-4'-phosphopantetheine + ATP + H(+) = 3'-dephospho-CoA + diphosphate. Its pathway is cofactor biosynthesis; coenzyme A biosynthesis. Functionally, reversibly transfers an adenylyl group from ATP to 4'-phosphopantetheine, yielding dephospho-CoA (dPCoA) and pyrophosphate. The polypeptide is Phosphopantetheine adenylyltransferase (Methanosarcina acetivorans (strain ATCC 35395 / DSM 2834 / JCM 12185 / C2A)).